We begin with the raw amino-acid sequence, 147 residues long: Acidic phospholipase A2 S9-53F (147 aa).

The signal sequence occupies residues 1-19 (MYPAHLLVLLAVCVSLLGA). The propeptide occupies 20–27 (SDIPPQPL). Disulfide bonds link cysteine 38/cysteine 99, cysteine 54/cysteine 146, cysteine 56/cysteine 72, cysteine 71/cysteine 127, cysteine 78/cysteine 120, cysteine 88/cysteine 113, and cysteine 106/cysteine 118. Positions 55, 57, and 59 each coordinate Ca(2+). Residue histidine 75 is part of the active site. Aspartate 76 lines the Ca(2+) pocket. Aspartate 121 is an active-site residue.

This sequence belongs to the phospholipase A2 family. Group I subfamily. D49 sub-subfamily. It depends on Ca(2+) as a cofactor. Expressed by the venom gland.

The protein localises to the secreted. The catalysed reaction is a 1,2-diacyl-sn-glycero-3-phosphocholine + H2O = a 1-acyl-sn-glycero-3-phosphocholine + a fatty acid + H(+). Snake venom phospholipase A2 (PLA2) that inhibits collagen-induced platelet aggregation. PLA2 catalyzes the calcium-dependent hydrolysis of the 2-acyl groups in 3-sn-phosphoglycerides. This is Acidic phospholipase A2 S9-53F from Austrelaps superbus (Lowland copperhead snake).